Consider the following 125-residue polypeptide: MADLNTIVDQLSGLTVMEAADLVKKLEEKWGVSAAAPVMVAGGAGGAAAAAPVEEKTEFNVVLADAGANKINVIKEVRAITGLGLKEAKDLVEGAPKEVKVGIPKAEADELKKKLEAAGAKVEIK.

The protein belongs to the bacterial ribosomal protein bL12 family. As to quaternary structure, homodimer. Part of the ribosomal stalk of the 50S ribosomal subunit. Forms a multimeric L10(L12)X complex, where L10 forms an elongated spine to which 2 to 4 L12 dimers bind in a sequential fashion. Binds GTP-bound translation factors.

Its function is as follows. Forms part of the ribosomal stalk which helps the ribosome interact with GTP-bound translation factors. Is thus essential for accurate translation. The protein is Large ribosomal subunit protein bL12 of Anaeromyxobacter sp. (strain Fw109-5).